Consider the following 122-residue polypeptide: Large ribosomal subunit protein uL14 (122 aa).

It belongs to the universal ribosomal protein uL14 family. In terms of assembly, part of the 50S ribosomal subunit. Forms a cluster with proteins L3 and L19. In the 70S ribosome, L14 and L19 interact and together make contacts with the 16S rRNA in bridges B5 and B8.

Its function is as follows. Binds to 23S rRNA. Forms part of two intersubunit bridges in the 70S ribosome. The chain is Large ribosomal subunit protein uL14 from Thiobacillus denitrificans (strain ATCC 25259 / T1).